We begin with the raw amino-acid sequence, 883 residues long: Pyruvate, phosphate dikinase 2 (883 aa).

The segment at 1–21 is disordered; it reads MAPAPCGRSSQRVFHFGKGKS. Histidine 465 (tele-phosphohistidine intermediate) is an active-site residue. Substrate is bound by residues arginine 571, arginine 628, glutamate 757, glycine 778, threonine 779, asparagine 780, and aspartate 781. Glutamate 757 lines the Mg(2+) pocket. Aspartate 781 contributes to the Mg(2+) binding site. The active-site Proton donor is the cysteine 843.

The protein belongs to the PEP-utilizing enzyme family. Requires Mg(2+) as cofactor. Expressed in leaves, roots and stems.

The protein resides in the cytoplasm. The enzyme catalyses pyruvate + phosphate + ATP = phosphoenolpyruvate + AMP + diphosphate + H(+). In terms of biological role, formation of phosphoenolpyruvate, which is the primary acceptor of CO(2) in C4 and some Crassulacean acid metabolism plants. This is Pyruvate, phosphate dikinase 2 from Zea mays (Maize).